We begin with the raw amino-acid sequence, 124 residues long: Small ribosomal subunit protein bS6 (124 aa).

The tract at residues 101-124 (IMMKEVQREEARKSAQSDAPAVAA) is disordered. Residues 105 to 115 (EVQREEARKSA) show a composition bias toward basic and acidic residues.

It belongs to the bacterial ribosomal protein bS6 family.

Its function is as follows. Binds together with bS18 to 16S ribosomal RNA. In Polynucleobacter asymbioticus (strain DSM 18221 / CIP 109841 / QLW-P1DMWA-1) (Polynucleobacter necessarius subsp. asymbioticus), this protein is Small ribosomal subunit protein bS6.